The chain runs to 83 residues: Small ribosomal subunit protein bS16 (83 aa).

This sequence belongs to the bacterial ribosomal protein bS16 family.

The sequence is that of Small ribosomal subunit protein bS16 from Shewanella woodyi (strain ATCC 51908 / MS32).